We begin with the raw amino-acid sequence, 58 residues long: DNA-directed RNA polymerases I, II, and III subunit RPABC4 (58 aa).

Zn(2+) contacts are provided by cysteine 19, cysteine 22, cysteine 36, and cysteine 39. Residues 19-39 form a C4-type zinc finger; it reads CGECHTENEIKSRDPIRCREC.

The protein belongs to the archaeal Rpo12/eukaryotic RPC10 RNA polymerase subunit family. As to quaternary structure, component of the RNA polymerase I (Pol I), RNA polymerase II (Pol II) and RNA polymerase III (Pol III) complexes consisting of at least 13, 12 and 17 subunits, respectively. Pol I complex consists of a ten-subunit catalytic core composed of POLR1A/RPA1, POLR1B/RPA2, POLR1C/RPAC1, POLR1D/RPAC2, POLR1H/RPA12, POLR2E/RPABC1, POLR2F/RPABC2, POLR2H/RPABC3, POLR2K/RPABC4 and POLR2L/RPABC5; a mobile stalk subunit POLR1F/RPA43 protruding from the core and additional subunits homologous to general transcription factors POLR1E/RPA49 and POLR1G/RPA34. Part of Pol I pre-initiation complex (PIC), in which Pol I core assembles with RRN3 and promoter-bound UTBF and SL1/TIF-IB complex. Pol II complex contains a ten-subunit catalytic core composed of POLR2A/RPB1, POLR2B/RPB2, POLR2C/RPB3, POLR2I/RPB9, POLR2J/RPB11, POLR2E/RPABC1, POLR2F/RPABC2, POLR2H/RPABC3, POLR2K/RPABC4 and POLR2L/RPABC5 and a mobile stalk composed of two subunits POLR2D/RPB4 and POLR2G/RPB7. Part of Pol II(G) complex, in which Pol II core associates with an additional subunit POLR2M; unlike conventional Pol II, Pol II(G) functions as a transcriptional repressor. Part of TBP-based Pol II pre-initiation complex (PIC), in which Pol II core assembles with general transcription factors and other specific initiation factors including GTF2E1, GTF2E2, GTF2F1, GTF2F2, TCEA1, ERCC2, ERCC3, GTF2H2, GTF2H3, GTF2H4, GTF2H5, GTF2A1, GTF2A2, GTF2B and TBP; this large multi-subunit PIC complex mediates DNA unwinding and targets Pol II core to the transcription start site where the first phosphodiester bond forms. Pol III complex consists of a ten-subunit catalytic core composed of POLR3A/RPC1, POLR3B/RPC2, POLR1C/RPAC1, POLR1D/RPAC2, POLR3K/RPC10, POLR2E/RPABC1, POLR2F/RPABC2, POLR2H/RPABC3, POLR2K/RPABC4 and POLR2L/RPABC5; a mobile stalk composed of two subunits POLR3H/RPC8 and CRCP/RPC9, protruding from the core and functioning primarily in transcription initiation; and additional subunits homologous to general transcription factors of the RNA polymerase II machinery, POLR3C/RPC3-POLR3F/RPC6-POLR3G/RPC7 heterotrimer required for transcription initiation and POLR3D/RPC4-POLR3E/RPC5 heterodimer involved in both transcription initiation and termination.

It is found in the nucleus. The protein localises to the nucleolus. DNA-dependent RNA polymerase catalyzes the transcription of DNA into RNA using the four ribonucleoside triphosphates as substrates. Common component of RNA polymerases I, II and III which synthesize ribosomal RNA precursors, mRNA precursors and many functional non-coding RNAs, and a small RNAs, such as 5S rRNA and tRNAs, respectively. The chain is DNA-directed RNA polymerases I, II, and III subunit RPABC4 (POLR2K) from Bos taurus (Bovine).